We begin with the raw amino-acid sequence, 428 residues long: Dual-specificity RNA methyltransferase RlmN (428 aa).

A compositionally biased stretch (basic and acidic residues) spans 1–17 (MPLHRVEALGEPQDRTG). Residues 1–44 (MPLHRVEALGEPQDRTGKTFSGRTNGPISSPLTDTERRMSIPQN) are disordered. Positions 18-33 (KTFSGRTNGPISSPLT) are enriched in polar residues. Glutamate 136 functions as the Proton acceptor in the catalytic mechanism. The Radical SAM core domain maps to 142 to 381 (EDDRGALCVS…APIRMPRGRD (240 aa)). Cysteine 149 and cysteine 386 are oxidised to a cystine. The [4Fe-4S] cluster site is built by cysteine 156, cysteine 160, and cysteine 163. Residues 212–213 (GE), serine 244, 266–268 (SLH), and asparagine 343 each bind S-adenosyl-L-methionine. Cysteine 386 serves as the catalytic S-methylcysteine intermediate.

The protein belongs to the radical SAM superfamily. RlmN family. [4Fe-4S] cluster is required as a cofactor.

The protein resides in the cytoplasm. The enzyme catalyses adenosine(2503) in 23S rRNA + 2 reduced [2Fe-2S]-[ferredoxin] + 2 S-adenosyl-L-methionine = 2-methyladenosine(2503) in 23S rRNA + 5'-deoxyadenosine + L-methionine + 2 oxidized [2Fe-2S]-[ferredoxin] + S-adenosyl-L-homocysteine. It carries out the reaction adenosine(37) in tRNA + 2 reduced [2Fe-2S]-[ferredoxin] + 2 S-adenosyl-L-methionine = 2-methyladenosine(37) in tRNA + 5'-deoxyadenosine + L-methionine + 2 oxidized [2Fe-2S]-[ferredoxin] + S-adenosyl-L-homocysteine. Its function is as follows. Specifically methylates position 2 of adenine 2503 in 23S rRNA and position 2 of adenine 37 in tRNAs. m2A2503 modification seems to play a crucial role in the proofreading step occurring at the peptidyl transferase center and thus would serve to optimize ribosomal fidelity. This Rhodospirillum rubrum (strain ATCC 11170 / ATH 1.1.1 / DSM 467 / LMG 4362 / NCIMB 8255 / S1) protein is Dual-specificity RNA methyltransferase RlmN.